We begin with the raw amino-acid sequence, 267 residues long: Methylglyoxal reductase DkgB (267 aa).

Tyr-39 functions as the Proton donor in the catalytic mechanism. His-97 contributes to the substrate binding site. 179-231 (MTLAYGKALKDEVIARIAVKHNATPVQVILAWAMGEGYSVIPSSTRRENLASN) contacts NADP(+).

This sequence belongs to the aldo/keto reductase family. In terms of assembly, monomer.

Its subcellular location is the cytoplasm. It catalyses the reaction hydroxyacetone + NADP(+) = methylglyoxal + NADPH + H(+). Aldo-keto reductase that significantly contributes to cellular methylglyoxal detoxification by catalyzing the NADPH-dependent conversion of methylglyoxal to acetol. The polypeptide is Methylglyoxal reductase DkgB (Salmonella typhi).